The sequence spans 302 residues: HTH-type transcriptional regulator ArgP (302 aa).

Residues 4 to 60 (PDYRTLQALDAVIRERGFERAAQKLCITQSAVSQRIKQLENLFGQPLLVRTVPPRPT) form the HTH lysR-type domain. The H-T-H motif DNA-binding region spans 21-40 (FERAAQKLCITQSAVSQRIK).

Belongs to the LysR transcriptional regulatory family. In terms of assembly, homodimer.

In terms of biological role, controls the transcription of genes involved in arginine and lysine metabolism. The chain is HTH-type transcriptional regulator ArgP from Yersinia pseudotuberculosis serotype O:1b (strain IP 31758).